The primary structure comprises 83 residues: MKTLLLTLVVVTIVCLDLGYTRRCFNHPSSQPQTNKSCPPGENSCYNKQWRDHRGTITERGCGCPQVKSGIKLTCCQSDDCNN.

Positions 1-21 are cleaved as a signal peptide; the sequence is MKTLLLTLVVVTIVCLDLGYT. Intrachain disulfides connect Cys24–Cys45, Cys38–Cys62, Cys64–Cys75, and Cys76–Cys81.

The protein belongs to the three-finger toxin family. Short-chain subfamily. Type I alpha-neurotoxin sub-subfamily. In terms of tissue distribution, expressed by the venom gland.

It is found in the secreted. Binds to muscle nicotinic acetylcholine receptor (nAChR) and inhibit acetylcholine from binding to the receptor, thereby impairing neuromuscular transmission. In Laticauda laticaudata (Blue-ringed sea krait), this protein is Short neurotoxin B.